Here is a 518-residue protein sequence, read N- to C-terminus: Glutamate--cysteine ligase (518 aa).

This sequence belongs to the glutamate--cysteine ligase type 1 family. Type 1 subfamily.

It catalyses the reaction L-cysteine + L-glutamate + ATP = gamma-L-glutamyl-L-cysteine + ADP + phosphate + H(+). The protein operates within sulfur metabolism; glutathione biosynthesis; glutathione from L-cysteine and L-glutamate: step 1/2. This is Glutamate--cysteine ligase from Buchnera aphidicola subsp. Acyrthosiphon pisum (strain 5A).